The sequence spans 343 residues: 3-hydroxy-3-methylglutaryl-CoA lyase, cytoplasmic (343 aa).

A lipid anchor (N-myristoyl glycine) is attached at G2. The Pyruvate carboxyltransferase domain occupies 48-315 (VKIVEVGPRD…NTGVDLHKVM (268 aa)). R56 contacts substrate. A divalent metal cation is bound by residues D57, H248, and H250. C281 is an active-site residue. N290 contacts a divalent metal cation.

Belongs to the HMG-CoA lyase family. Requires a divalent metal cation as cofactor. In terms of tissue distribution, present at high level in duodenum and small intestine (at protein level).

It is found in the cytoplasm. The protein resides in the cytosol. The protein localises to the endoplasmic reticulum membrane. The catalysed reaction is (3S)-3-hydroxy-3-methylglutaryl-CoA = acetoacetate + acetyl-CoA. The protein operates within metabolic intermediate metabolism; (S)-3-hydroxy-3-methylglutaryl-CoA degradation; acetoacetate from (S)-3-hydroxy-3-methylglutaryl-CoA: step 1/1. Its function is as follows. Non-mitochondrial 3-hydroxy-3-methylglutaryl-CoA lyase that catalyzes a cation-dependent cleavage of (S)-3-hydroxy-3-methylglutaryl-CoA into acetyl-CoA and acetoacetate, a key step in ketogenesis, the products of which support energy production in nonhepatic animal tissues. The sequence is that of 3-hydroxy-3-methylglutaryl-CoA lyase, cytoplasmic (Hmgcll1) from Rattus norvegicus (Rat).